Here is a 240-residue protein sequence, read N- to C-terminus: 4-hydroxy-tetrahydrodipicolinate reductase (240 aa).

NAD(+) is bound by residues 79 to 81 (ATT) and 103 to 106 (SANM). Catalysis depends on His135, which acts as the Proton donor/acceptor. His136 lines the (S)-2,3,4,5-tetrahydrodipicolinate pocket. The Proton donor role is filled by Lys139. 145-146 (GT) provides a ligand contact to (S)-2,3,4,5-tetrahydrodipicolinate.

It belongs to the DapB family.

The protein localises to the cytoplasm. The enzyme catalyses (S)-2,3,4,5-tetrahydrodipicolinate + NAD(+) + H2O = (2S,4S)-4-hydroxy-2,3,4,5-tetrahydrodipicolinate + NADH + H(+). The catalysed reaction is (S)-2,3,4,5-tetrahydrodipicolinate + NADP(+) + H2O = (2S,4S)-4-hydroxy-2,3,4,5-tetrahydrodipicolinate + NADPH + H(+). The protein operates within amino-acid biosynthesis; L-lysine biosynthesis via DAP pathway; (S)-tetrahydrodipicolinate from L-aspartate: step 4/4. Its function is as follows. Catalyzes the conversion of 4-hydroxy-tetrahydrodipicolinate (HTPA) to tetrahydrodipicolinate. This is 4-hydroxy-tetrahydrodipicolinate reductase from Staphylococcus aureus (strain MRSA252).